The sequence spans 381 residues: Genome polyprotein (381 aa).

Residues 115–155 (ANDTIDTGGNSKKDVKPEQGSIQPSSNKGKEKDVNAGTSGT) are disordered.

Belongs to the potyviridae genome polyprotein family. In terms of processing, genome polyprotein of potyviruses undergoes post-translational proteolytic processing by the main proteinase NIa-pro resulting in the production of at least ten individual proteins. The P1 proteinase and the HC-pro cleave only their respective C-termini autocatalytically. 6K1 is essential for proper proteolytic separation of P3 from CI.

It is found in the virion. It carries out the reaction RNA(n) + a ribonucleoside 5'-triphosphate = RNA(n+1) + diphosphate. In terms of biological role, an RNA-dependent RNA polymerase that plays an essential role in the virus replication. Involved in aphid transmission, cell-to-cell and systemis movement, encapsidation of the viral RNA and in the regulation of viral RNA amplification. The polypeptide is Genome polyprotein (Capsicum annuum (Capsicum pepper)).